The sequence spans 272 residues: Outer surface protein A (272 aa).

The N-terminal stretch at 1-16 (MKKYLLGIGLILALIA) is a signal peptide. Residue Cys17 is the site of N-palmitoyl cysteine attachment. A lipid anchor (S-diacylglycerol cysteine) is attached at Cys17.

Belongs to the OspA lipoprotein family.

Its subcellular location is the cell outer membrane. It is found in the cell surface. The polypeptide is Outer surface protein A (Borreliella burgdorferi (Lyme disease spirochete)).